The following is a 133-amino-acid chain: U-scoloptoxin(05)-Sa1a (133 aa).

An N-terminal signal peptide occupies residues 1 to 24; it reads MPSLCIIALFGTLTFYTLIPSIHT.

The protein belongs to the scoloptoxin-05 family. Contains 5 disulfide bonds. Expressed by the venom gland.

Its subcellular location is the secreted. This Scolopendra alternans (Florida Keys giant centipede) protein is U-scoloptoxin(05)-Sa1a.